Consider the following 400-residue polypeptide: GTPase Obg (400 aa).

In terms of domain architecture, Obg spans 1 to 159 (MKFVDEVQIR…RTLKLELLLL (159 aa)). One can recognise an OBG-type G domain in the interval 160–333 (ADVGMLGLPN…VCYDILDLLD (174 aa)). Residues 166 to 173 (GLPNAGKS), 191 to 195 (FTTLV), 213 to 216 (DIPG), 283 to 286 (NKMD), and 314 to 316 (TAI) contribute to the GTP site. Mg(2+) is bound by residues Ser-173 and Thr-193.

Belongs to the TRAFAC class OBG-HflX-like GTPase superfamily. OBG GTPase family. As to quaternary structure, monomer. The cofactor is Mg(2+).

Its subcellular location is the cytoplasm. Functionally, an essential GTPase which binds GTP, GDP and possibly (p)ppGpp with moderate affinity, with high nucleotide exchange rates and a fairly low GTP hydrolysis rate. Plays a role in control of the cell cycle, stress response, ribosome biogenesis and in those bacteria that undergo differentiation, in morphogenesis control. The protein is GTPase Obg of Aeromonas hydrophila subsp. hydrophila (strain ATCC 7966 / DSM 30187 / BCRC 13018 / CCUG 14551 / JCM 1027 / KCTC 2358 / NCIMB 9240 / NCTC 8049).